Consider the following 466-residue polypeptide: Eukaryotic translation initiation factor 3 subunit M (466 aa).

The interval Glu-40–Gln-62 is disordered. The region spanning Ala-211 to Tyr-378 is the PCI domain. Residues Ala-424–Glu-466 form a disordered region. The span at Ser-433–Arg-443 shows a compositional bias: basic and acidic residues. The span at Gln-451–Gln-460 shows a compositional bias: low complexity.

This sequence belongs to the eIF-3 subunit M family. Component of the eukaryotic translation initiation factor 3 (eIF-3) complex.

It is found in the cytoplasm. Its function is as follows. Component of the eukaryotic translation initiation factor 3 (eIF-3) complex, which is involved in protein synthesis of a specialized repertoire of mRNAs and, together with other initiation factors, stimulates binding of mRNA and methionyl-tRNAi to the 40S ribosome. The eIF-3 complex specifically targets and initiates translation of a subset of mRNAs involved in cell proliferation. The sequence is that of Eukaryotic translation initiation factor 3 subunit M from Aspergillus oryzae (strain ATCC 42149 / RIB 40) (Yellow koji mold).